We begin with the raw amino-acid sequence, 558 residues long: Phosphatidylserine lipase ABHD16A (558 aa).

The next 2 membrane-spanning stretches (helical) occupy residues 60–80 (ILAL…FAFF) and 93–113 (VVPF…VACL). Residues 114-558 (RGIGRWTNPQ…AQNFQMPWHL (445 aa)) are Cytoplasmic-facing. An AB hydrolase-1 domain is found at 281–407 (LVICCEGNAG…LVTRTVRQHL (127 aa)). Residues S355, D430, and H507 each act as charge relay system in the active site.

The protein belongs to the AB hydrolase superfamily. ABHD16 family.

Its subcellular location is the membrane. The catalysed reaction is 1-heptadecanoyl-2-(5Z,8Z,11Z,14Z-eicosatetraenoyl)-sn-glycero-3-phosphoserine + H2O = 1-heptadecanoyl-sn-glycero-3-phosphoserine + (5Z,8Z,11Z,14Z)-eicosatetraenoate + H(+). It catalyses the reaction 1-hexadecanoyl-2-(9Z-octadecenoyl)-sn-glycero-3-phospho-L-serine + H2O = 1-hexadecanoyl-sn-glycero-3-phospho-L-serine + (9Z)-octadecenoate + H(+). The enzyme catalyses 1-octadecanoyl-2-(9Z,12Z-octadecadienoyl)-sn-glycero-3-phosphoserine + H2O = 1-octadecanoyl-sn-glycero-3-phosphoserine + (9Z,12Z)-octadecadienoate + H(+). It carries out the reaction 1-heptadecanoyl-2-(5Z,8Z,11Z,14Z-eicosatetraenoyl)-sn-glycero-3-phosphocholine + H2O = 1-heptadecanoyl-sn-glycero-3-phosphocholine + (5Z,8Z,11Z,14Z)-eicosatetraenoate + H(+). The catalysed reaction is 1-hexadecanoyl-2-(9Z-octadecenoyl)-sn-glycero-3-phosphoglycerol + H2O = 1-hexadecanoyl-sn-glycero-3-phosphoglycerol + (9Z)-octadecenoate + H(+). It catalyses the reaction 1-hexadecanoyl-2-(9Z-octadecenoyl)-sn-glycero-3-phospho-(1D-myo-inositol) + H2O = 1-hexadecanoyl-sn-glycero-3-phospho-(1D-myo-inositol) + (9Z)-octadecenoate + H(+). The enzyme catalyses 1-heptadecanoyl-2-(5Z,8Z,11Z,14Z-eicosatetraenoyl)-sn-glycero-3-phosphoethanolamine + H2O = 1-heptadecanoyl-sn-glycero-3-phosphoethanolamine + (5Z,8Z,11Z,14Z)-eicosatetraenoate + H(+). It carries out the reaction 1-hexadecanoyl-2-(9Z-octadecenoyl)-sn-glycero-3-phospho-(1'-sn-glycerol) + H2O = 1-hexadecanoyl-sn-glycero-3-phospho-(1'-sn-glycerol) + (9Z)-octadecenoate + H(+). The catalysed reaction is Hydrolyzes glycerol monoesters of long-chain fatty acids.. It catalyses the reaction 1-tetradecanoylglycerol + H2O = tetradecanoate + glycerol + H(+). The enzyme catalyses 2-hexadecanoylglycerol + H2O = glycerol + hexadecanoate + H(+). It carries out the reaction 1-(9Z-octadecenoyl)-glycerol + H2O = glycerol + (9Z)-octadecenoate + H(+). The catalysed reaction is 2-(9Z-octadecenoyl)-glycerol + H2O = glycerol + (9Z)-octadecenoate + H(+). It catalyses the reaction 2-(9Z,12Z-octadecadienoyl)-glycerol + H2O = (9Z,12Z)-octadecadienoate + glycerol + H(+). The enzyme catalyses 1-(5Z,8Z,11Z,14Z-eicosatetraenoyl)-glycerol + H2O = glycerol + (5Z,8Z,11Z,14Z)-eicosatetraenoate + H(+). It carries out the reaction 2-(5Z,8Z,11Z,14Z-eicosatetraenoyl)-glycerol + H2O = glycerol + (5Z,8Z,11Z,14Z)-eicosatetraenoate + H(+). The catalysed reaction is prostaglandin D2-1-glycerol ester + H2O = prostaglandin D2 + glycerol + H(+). It catalyses the reaction 2-glyceryl-15-deoxy-Delta(12,14)-prostaglandin J2 + H2O = 15-deoxy-Delta(12,14)-prostaglandin J2 + glycerol + H(+). The enzyme catalyses 1-(9Z,12Z-octadecadienoyl)-glycerol + H2O = (9Z,12Z)-octadecadienoate + glycerol + H(+). In terms of biological role, phosphatidylserine (PS) lipase that mediates the hydrolysis of phosphatidylserine to generate lysophosphatidylserine (LPS). LPS constitutes a class of signaling lipids that regulates immunological and neurological processes. Has no activity towards diacylglycerol, triacylglycerol or lysophosphatidylserine lipase. Also has monoacylglycerol lipase activity, with preference for 1-(9Z,12Z-octadecadienoyl)-glycerol (1-LG) and 2-glyceryl-15-deoxy-Delta(12,14)-prostaglandin J2 (15d-PGJ(2)-G). This Bos taurus (Bovine) protein is Phosphatidylserine lipase ABHD16A.